The following is a 360-amino-acid chain: Phenylalanine--tRNA ligase alpha subunit (360 aa).

Residue Glu-260 participates in Mg(2+) binding.

The protein belongs to the class-II aminoacyl-tRNA synthetase family. Phe-tRNA synthetase alpha subunit type 1 subfamily. Tetramer of two alpha and two beta subunits. The cofactor is Mg(2+).

The protein localises to the cytoplasm. The catalysed reaction is tRNA(Phe) + L-phenylalanine + ATP = L-phenylalanyl-tRNA(Phe) + AMP + diphosphate + H(+). In Methylobacterium sp. (strain 4-46), this protein is Phenylalanine--tRNA ligase alpha subunit.